The chain runs to 767 residues: Cilium assembly protein DZIP1L (767 aa).

Residues 122-144 form a disordered region; that stretch reads QQRGQQELGRQADELKGVREESR. The segment covering 131 to 144 has biased composition (basic and acidic residues); that stretch reads RQADELKGVREESR. The C2H2-type zinc-finger motif lies at 166–189; it reads HTCHLCDKTFMNATFLRGHIQRRH. Residues 205 to 406 are a coiled coil; that stretch reads VEEVLEELRA…SQEEMIQSLS (202 aa). Residue serine 426 is modified to Phosphoserine. The interval 518–767 is disordered; the sequence is SRAKERQENG…SSGQPRVPAW (250 aa). 2 stretches are compositionally biased toward polar residues: residues 533–547 and 574–588; these read PDGQPSVKSQQSTLV and RQSHGSHGSSLTQVS. Over residues 607 to 616 the composition is skewed to low complexity; sequence GPGMSTPPFS. Residues 658-675 are compositionally biased toward polar residues; that stretch reads ENAQPPGQGSGTLVQSMV. A compositionally biased stretch (basic and acidic residues) spans 677-686; sequence NLEKQLEAPA.

The protein belongs to the DZIP C2H2-type zinc-finger protein family. As to quaternary structure, interacts with SEPTIN2.

The protein resides in the cytoplasm. It is found in the cytoskeleton. Its subcellular location is the cilium basal body. The protein localises to the microtubule organizing center. It localises to the centrosome. The protein resides in the centriole. Involved in primary cilium formation. Probably acts as a transition zone protein required for localization of PKD1/PC1 and PKD2/PC2 to the ciliary membrane. The chain is Cilium assembly protein DZIP1L from Homo sapiens (Human).